Consider the following 255-residue polypeptide: 1-(5-phosphoribosyl)-5-[(5-phosphoribosylamino)methylideneamino] imidazole-4-carboxamide isomerase (255 aa).

The Proton acceptor role is filled by Asp-12. Residue Asp-131 is the Proton donor of the active site.

Belongs to the HisA/HisF family.

Its subcellular location is the cytoplasm. It carries out the reaction 1-(5-phospho-beta-D-ribosyl)-5-[(5-phospho-beta-D-ribosylamino)methylideneamino]imidazole-4-carboxamide = 5-[(5-phospho-1-deoxy-D-ribulos-1-ylimino)methylamino]-1-(5-phospho-beta-D-ribosyl)imidazole-4-carboxamide. It participates in amino-acid biosynthesis; L-histidine biosynthesis; L-histidine from 5-phospho-alpha-D-ribose 1-diphosphate: step 4/9. This Cutibacterium acnes (strain DSM 16379 / KPA171202) (Propionibacterium acnes) protein is 1-(5-phosphoribosyl)-5-[(5-phosphoribosylamino)methylideneamino] imidazole-4-carboxamide isomerase.